A 64-amino-acid polypeptide reads, in one-letter code: MDAARAQQIIESDQVIEVLHEGSPVWIEKVMDNNMAHVSYIHTKEEKDVPLYMLVEKELPKNFH.

This sequence belongs to the SspH family.

It is found in the spore core. The protein is Small, acid-soluble spore protein H of Acetivibrio thermocellus (strain ATCC 27405 / DSM 1237 / JCM 9322 / NBRC 103400 / NCIMB 10682 / NRRL B-4536 / VPI 7372) (Clostridium thermocellum).